A 532-amino-acid chain; its full sequence is SET and MYND domain-containing protein DDB_G0288495 (532 aa).

Residues 25-448 (PWIEVKSVSE…ENQELLITYI (424 aa)) enclose the SET domain. The segment at 70–116 (CTTCFKILLESNRHNFQTCPSCFQVNYCSNYCKQYSKIETKHTELEC) adopts an MYND-type; degenerate zinc-finger fold. A coiled-coil region spans residues 199-240 (INSKNNNEFENEEEEEEEQEQKGEGEQEENENNENNEKVKKK). A disordered region spans residues 204 to 234 (NNEFENEEEEEEEQEQKGEGEQEENENNENN). A compositionally biased stretch (acidic residues) spans 207-217 (FENEEEEEEEQ).

The protein belongs to the class V-like SAM-binding methyltransferase superfamily.

Its function is as follows. Probable methyltransferase. In Dictyostelium discoideum (Social amoeba), this protein is SET and MYND domain-containing protein DDB_G0288495.